Reading from the N-terminus, the 177-residue chain is Large ribosomal subunit protein uL6 (177 aa).

This sequence belongs to the universal ribosomal protein uL6 family. In terms of assembly, part of the 50S ribosomal subunit.

In terms of biological role, this protein binds to the 23S rRNA, and is important in its secondary structure. It is located near the subunit interface in the base of the L7/L12 stalk, and near the tRNA binding site of the peptidyltransferase center. The sequence is that of Large ribosomal subunit protein uL6 from Rickettsia conorii (strain ATCC VR-613 / Malish 7).